The primary structure comprises 611 residues: MSAVSQPQAAPSPLEKSPSTAILCNTCGNVCKGEVLRVQDKYFHIKCFVCKACGCDLAEGGFFVRQGEYICTLDYQRLYGTRCFSCDQFIEGEVVSALGKTYHPDCFVCAVCRLPFPPGDRVTFNGKECMCQKCSLPVSVGSSAHLSQGLRSCGGCGTEIKNGQALVALDKHWHLGCFKCKSCGKLLNAEYISKDGLPYCEADYHAKFGIRCDSCEKYITGRVLEAGEKHYHPSCALCVRCGQMFAEGEEMYLQGSSIWHPACRQAARTEDRNKETRTSSESIISVPASSTSGSPSRVIYAKLGGEILDYRDLAALPKSKAIYDIDRPDMISYSPYISHSAGDRQSYGEGDQDDRSYKQCRTSSPSSTGSVSLGRYTPTSRSPQHYSRPGSESGRSTPSLSVLSDSKPPPSTYQQAPRHFHVPDTGVKDNIYRKPPIYRQHAARRSDGEDGSLDQDNRKKSSWLMLKGDADTRTNSPDLDTQSLSHSSGTDRDPLQRMAGDSFHSRFPYSKSDPLPGHGKNGLDQRNANLAPCGADPDASWGMREYKIYPYDSLIVTNRIRVKLPKDVDRTRLERHLSPEEFQEVFGMSIEEFDRLALWKRNDLKKKALLF.

LIM zinc-binding domains lie at 22–81, 81–141, 151–210, and 210–270; these read ILCN…LYGT, TRCF…VSVG, RSCG…KFGI, and IRCD…ARTE. Zn(2+)-binding residues include cysteine 83, cysteine 86, histidine 103, cysteine 106, cysteine 109, cysteine 112, cysteine 131, and cysteine 134. Residues cysteine 212, cysteine 215, histidine 232, cysteine 235, cysteine 238, cysteine 241, histidine 260, and cysteine 263 each coordinate Zn(2+). A compositionally biased stretch (basic and acidic residues) spans 269-278; it reads TEDRNKETRT. Disordered stretches follow at residues 269-295 and 336-527; these read TEDR…SGSP and YISH…DQRN. Low complexity-rich tracts occupy residues 279–295 and 363–372; these read SSES…SGSP and SSPSSTGSVS. Residues serine 282, serine 294, serine 364, and serine 367 each carry the phosphoserine modification. Residues 393–404 show a composition bias toward polar residues; it reads SGRSTPSLSVLS. Phosphoserine is present on serine 452. Phosphothreonine is present on threonine 472. A compositionally biased stretch (polar residues) spans 473–488; it reads RTNSPDLDTQSLSHSS. Residues serine 476 and serine 578 each carry the phosphoserine modification. One can recognise an HP domain in the interval 543-611; the sequence is MREYKIYPYD…NDLKKKALLF (69 aa).

Interacts with F-actin and ABRA. As to expression, highly expressed in skeletal muscle.

The protein resides in the cytoplasm. In terms of biological role, may act as scaffold protein. May stimulate ABRA activity and ABRA-dependent SRF transcriptional activity. The protein is Actin-binding LIM protein 2 (ABLIM2) of Homo sapiens (Human).